A 242-amino-acid polypeptide reads, in one-letter code: Protein HTATIP2 (242 aa).

Ala2 carries the N-acetylalanine modification. The segment at 2 to 25 (ADKEALPKLREDFKMQNKSVFILG) is required for interaction with elongation factor EEF1A1. Positions 27, 28, 29, 30, 52, 53, 92, 93, 143, 147, 170, and 178 each coordinate NADPH. The active-site Proton acceptor is the Tyr143. Residue Lys147 is part of the active site.

As to quaternary structure, monomer. Forms homodimers during oxidative stress. Interacts (via N-terminus) with elongation factor EEF1A1 (via middle-region); the interaction is direct and competes with EEF1A1 binding to guanyl-nucleotide exchange factor EEF1B2, thereby inhibiting GDP for GTP exchange and reactivation of EEF1A1. Interacts with nuclear transport receptors XPO4, IPO5/RANBP5, IPO7, IPO9 and KPNB1 as well as GCN1L1/GCN1 and LRPPRC probably through their HEAT repeats. Binds NCOA5/CIA.

Its subcellular location is the cytoplasm. Represses translation by preventing reactivation of elongation factor eEF1A. May also inhibit nuclear import by competing with nuclear import substrates for binding to a subset of nuclear transport receptors. Has additionally been proposed to act as a redox sensor involved in cellular oxidative stress surveillance. The protein is Protein HTATIP2 of Mus musculus (Mouse).